The primary structure comprises 758 residues: Vitamin K-dependent gamma-carboxylase (758 aa).

The tract at residues 1–34 (MAVSARPARAPRGPDKVKKDKAAQTSGPRQGSQM) is disordered. Position 2 is an N-acetylalanine (Ala2). The Cytoplasmic portion of the chain corresponds to 2–60 (AVSARPARAPRGPDKVKKDKAAQTSGPRQGSQMGKLLGFEWTDVSSWERLVTLLNRPTD). The segment covering 12–22 (RGPDKVKKDKA) has biased composition (basic and acidic residues). Over residues 23–33 (AQTSGPRQGSQ) the composition is skewed to polar residues. A helical transmembrane segment spans residues 61-81 (PASLAVFRFLFGLMMVLDIPQ). The Lumenal segment spans residues 82-113 (ERGLSSLDRRYLDGLEVCRFPLLDALQPLPLD). Cys99 and Cys450 are disulfide-bonded. Residues 114–134 (WMYLVYTIMFLGALGMMLGLC) form a helical membrane-spanning segment. Topologically, residues 135 to 136 (YR) are cytoplasmic. Residues 137–157 (ISCVLFLLPYWYVFLLDKTSW) form a helical membrane-spanning segment. Residues 158-292 (NNHSYLYGLL…VSYFHCMNSQ (135 aa)) are Lumenal-facing. Residues 293 to 313 (LFSIGMFPYVMLASSPLFCSP) form a helical membrane-spanning segment. Residues 314–361 (EWPRKLVAHCPKKLQELLPLRTAPQPSTSCMYKRSRARGSQKPGLRHQ) are Cytoplasmic-facing. The helical transmembrane segment at 362-382 (LSTAFTLLYLLEQLFLPYSHF) threads the bilayer. Residues 383–758 (LTQGYNNWTN…PDSHPVHSEF (376 aa)) are Lumenal-facing. Positions 726–758 (RPFEPAGEPSPVNTDSSNPNPPEPDSHPVHSEF) are disordered. The span at 749 to 758 (PDSHPVHSEF) shows a compositional bias: basic and acidic residues.

The protein belongs to the vitamin K-dependent gamma-carboxylase family. In terms of assembly, monomer. May interact with CALU.

It localises to the endoplasmic reticulum membrane. It carries out the reaction 4-carboxy-L-glutamyl-[protein] + 2,3-epoxyphylloquinone + H2O + H(+) = phylloquinol + L-glutamyl-[protein] + CO2 + O2. Functionally, mediates the vitamin K-dependent carboxylation of glutamate residues to calcium-binding gamma-carboxyglutamate (Gla) residues with the concomitant conversion of the reduced hydroquinone form of vitamin K to vitamin K epoxide. Catalyzes gamma-carboxylation of various proteins, such as blood coagulation factors (F2, F7, F9 and F10), osteocalcin (BGLAP) or matrix Gla protein (MGP). This chain is Vitamin K-dependent gamma-carboxylase (GGCX), found in Ovis aries (Sheep).